Consider the following 98-residue polypeptide: Integration host factor subunit alpha (98 aa).

The segment at 49-70 is disordered; the sequence is FGNFDLRDKNQRPGRNPKTGED.

It belongs to the bacterial histone-like protein family. Heterodimer of an alpha and a beta chain.

Its function is as follows. This protein is one of the two subunits of integration host factor, a specific DNA-binding protein that functions in genetic recombination as well as in transcriptional and translational control. In Shewanella baltica (strain OS223), this protein is Integration host factor subunit alpha.